Here is a 590-residue protein sequence, read N- to C-terminus: Aspartate--tRNA(Asp/Asn) ligase (590 aa).

Glutamate 175 is a binding site for L-aspartate. Residues 199–202 (QQYK) form an aspartate region. Residues arginine 221 and histidine 450 each coordinate L-aspartate. 221 to 223 (RDE) provides a ligand contact to ATP. Glutamate 484 serves as a coordination point for ATP. Arginine 491 lines the L-aspartate pocket. 536 to 539 (GVDR) is a binding site for ATP.

The protein belongs to the class-II aminoacyl-tRNA synthetase family. Type 1 subfamily. Homodimer.

It localises to the cytoplasm. It carries out the reaction tRNA(Asx) + L-aspartate + ATP = L-aspartyl-tRNA(Asx) + AMP + diphosphate. Functionally, aspartyl-tRNA synthetase with relaxed tRNA specificity since it is able to aspartylate not only its cognate tRNA(Asp) but also tRNA(Asn). Reaction proceeds in two steps: L-aspartate is first activated by ATP to form Asp-AMP and then transferred to the acceptor end of tRNA(Asp/Asn). This Rhodopseudomonas palustris (strain BisA53) protein is Aspartate--tRNA(Asp/Asn) ligase.